A 480-amino-acid polypeptide reads, in one-letter code: Gamma-aminobutyric acid receptor subunit rho-1 (480 aa).

The first 21 residues, 1–21, serve as a signal peptide directing secretion; the sequence is MLAVRNMKFGIFLLWWGWVLA. Topologically, residues 22–281 are extracellular; the sequence is AESTVHWPGR…LYINFTLRRH (260 aa). The segment at 31-67 is disordered; the sequence is REVHEPSKKGSRPQRQRRGAHDDAHKQGSPILKRSSD. Positions 39-48 are enriched in basic residues; that stretch reads KGSRPQRQRR. Position 126 (Arg126) interacts with 4-aminobutanoate. Residue Asn141 is glycosylated (N-linked (GlcNAc...) asparagine). Ser190 is a binding site for 4-aminobutanoate. Cysteines 199 and 213 form a disulfide. 4-aminobutanoate is bound at residue Glu218. N-linked (GlcNAc...) asparagine glycosylation is found at Asn235 and Asn275. Residues 282–302 form a helical membrane-spanning segment; that stretch reads IFFFLLQTYFPATLMVMLSWV. Residues 303–314 are Cytoplasmic-facing; that stretch reads SFWIDRRAVPAR. A helical membrane pass occupies residues 315–335; sequence VPLGITTVLTMSTIITGVNAS. The Extracellular portion of the chain corresponds to 336 to 346; it reads MPRVSYIKAVD. A helical transmembrane segment spans residues 347–367; sequence IYLWVSFVFVFLSVLEYAAVN. Over 368-458 the chain is Cytoplasmic; that stretch reads YLTTVQERKE…MRINTHAIDK (91 aa). The helical transmembrane segment at 459–479 threads the bilayer; sequence YSRIIFPAAYILFNLIYWSIF. Residue Ser480 is a topological domain, extracellular.

The protein belongs to the ligand-gated ion channel (TC 1.A.9) family. Gamma-aminobutyric acid receptor (TC 1.A.9.5) subfamily. GABRR1 sub-subfamily. In terms of assembly, three rho subunits (rho-1/GBRR1, rho-2/GBRR2 and rho-3/GBRR3) coassemble either to form functional homopentamers or heteropentamers. Rho-1/GBRR1 subunits can also associate with alpha-1/GBRA1 subunits to form a functional GABAAR. Interacts with SQSTM1.

It is found in the postsynaptic cell membrane. It localises to the cell membrane. It catalyses the reaction chloride(in) = chloride(out). With respect to regulation, inhibited by TPMPA, a rho-specific antagonist. Inhibited by picrotoxin, when forming a homopentamer. In contrast with other GABAARs, rho-1 GABAAR is not inhibited by bicuculline, when forming a homopentamer. Down-regulated by external protons when forming a homopentamer. In terms of biological role, rho subunit of the pentameric ligand-gated chloride channels responsible for mediating the effects of gamma-aminobutyric acid (GABA), the major inhibitory neurotransmitter in the brain. Rho-containing GABA-gated chloride channels are a subclass of GABA(A) receptors (GABAARs) entirely composed of rho subunits, where GABA molecules bind at the rho intersubunit interfaces. When activated by GABA, rho-GABAARs selectively allow the flow of chloride anions across the cell membrane down their electrochemical gradient. Rho-1 subunits are primarily expressed in retina where rho-1-containing GABAARs may play a role in retinal neurotransmission. Rho-1 GABAARs are also involved in neuronal tonic (extrasynaptic) and phasic (synaptic) transmission in the Purkinje neurons of the cerebellum. Rho-1 GABAARs may also contribute to the regulation of glial development in the cerebellum by controlling extrasynaptic transmission. This chain is Gamma-aminobutyric acid receptor subunit rho-1, found in Rattus norvegicus (Rat).